Consider the following 112-residue polypeptide: Flowering-promoting factor 1-like protein 2 (112 aa).

The protein belongs to the FPF1 family. As to expression, expressed in leaves and in some parts of the flowers, mainly in the sepals.

Modulates the competence to flowering of apical meristems. The polypeptide is Flowering-promoting factor 1-like protein 2 (FLP2) (Arabidopsis thaliana (Mouse-ear cress)).